We begin with the raw amino-acid sequence, 277 residues long: Large ribosomal subunit protein uL2 (277 aa).

Residues 222–277 (GVTMNPVDHPHGGGEGRTSGGRHPVTPWGKPTKGKKTRSNKSTNKFILISRHKRKK) form a disordered region.

The protein belongs to the universal ribosomal protein uL2 family. Part of the 50S ribosomal subunit. Forms a bridge to the 30S subunit in the 70S ribosome.

One of the primary rRNA binding proteins. Required for association of the 30S and 50S subunits to form the 70S ribosome, for tRNA binding and peptide bond formation. It has been suggested to have peptidyltransferase activity; this is somewhat controversial. Makes several contacts with the 16S rRNA in the 70S ribosome. This chain is Large ribosomal subunit protein uL2, found in Rhodopseudomonas palustris (strain BisB18).